An 860-amino-acid polypeptide reads, in one-letter code: Transcription factor E2F8 (860 aa).

Disordered regions lie at residues 1–27 (MENQKENLFSEPHKRGLMKSPLHPSSK) and 38–57 (DLGPLTTPTKPKEVSQGEPW). 2 positions are modified to phosphoserine: S71 and S102. 2 DNA-binding regions span residues 113–182 (RKEK…TWHG) and 261–347 (RKDK…KWTG). Disordered stretches follow at residues 407 to 433 (RRKISSAPSSPVKSNKAESSQNSPPVP), 532 to 616 (LTPP…PKED), and 745 to 803 (QMSA…QPVP). S412 and S416 each carry phosphoserine. Composition is skewed to polar residues over residues 412–429 (SAPSSPVKSNKAESSQNS) and 542–554 (VCPTQPSNATGSK). A compositionally biased stretch (basic and acidic residues) spans 555–565 (DPTDAPAEKTA).

It belongs to the E2F/DP family. In terms of assembly, interacts with HIF1A. Homodimer and heterodimer: mainly forms homodimers and, to a lesser extent, heterodimers with E2F8. Dimerization is important for DNA-binding. Highly expressed in liver, skin, thymus and testis. Expressed in trophoblast giant cells throughout placenta development (at protein level).

The protein localises to the nucleus. Atypical E2F transcription factor that participates in various processes such as angiogenesis and polyploidization of specialized cells. Mainly acts as a transcription repressor that binds DNA independently of DP proteins and specifically recognizes the E2 recognition site 5'-TTTC[CG]CGC-3'. Directly represses transcription of classical E2F transcription factors such as E2F1: component of a feedback loop in S phase by repressing the expression of E2F1, thereby preventing p53/TP53-dependent apoptosis. Plays a key role in polyploidization of cells in placenta and liver by regulating the endocycle, probably by repressing genes promoting cytokinesis and antagonizing action of classical E2F proteins (E2F1, E2F2 and/or E2F3). Required for placental development by promoting polyploidization of trophoblast giant cells. Acts as a promoter of sprouting angiogenesis, possibly by acting as a transcription activator: associates with HIF1A, recognizes and binds the VEGFA promoter, which is different from canonical E2 recognition site, and activates expression of the VEGFA gene. This is Transcription factor E2F8 (E2f8) from Mus musculus (Mouse).